The sequence spans 1890 residues: Callose synthase 9 (1890 aa).

Topologically, residues 1–489 are cytoplasmic; it reads MSRAESSWER…EHRTFLHLYH (489 aa). A helical transmembrane segment spans residues 490 to 510; the sequence is SFHRLWIFLAMMFQALAIIAF. Residues 511-523 lie on the Extracellular side of the membrane; sequence NKDDLTSRKTLLQ. The chain crosses the membrane as a helical span at residues 524 to 544; the sequence is ILSLGPTFVVMKFSESVLEVI. Residues 545–560 lie on the Cytoplasmic side of the membrane; the sequence is MMYGAYSTTRRLAVSR. Residues 561 to 581 form a helical membrane-spanning segment; the sequence is IFLRFIWFGLASVFISFLYVK. The Extracellular segment spans residues 582–591; sequence SLKAPNSDSP. Residues 592 to 612 form a helical membrane-spanning segment; sequence IVQLYLIVIAIYGGVQFFFSI. Over 613–658 the chain is Cytoplasmic; it reads LMRIPTCHNIANKCDRWPVIRFFKWMRQERHYVGRGMYERTSDFIK. A helical membrane pass occupies residues 659–679; sequence YLLFWLVVLSAKFSFAYFLQI. Topologically, residues 680 to 722 are extracellular; that stretch reads KPLVGPTRMIVKQNNIPYSWHDFVSRKNYNALTVASLWAPVVA. Residues 723-743 form a helical membrane-spanning segment; the sequence is IYLLDIHIFYTIFSAFLGFLL. At 744 to 1457 the chain is on the cytoplasmic side; it reads GARDRLGEIR…QLLDFFRMMS (714 aa). A helical transmembrane segment spans residues 1458–1478; that stretch reads FFFTTVGFYLCTMLTVLTVYI. Over 1479–1512 the chain is Extracellular; that stretch reads FLYGRAYLALSGVGATIRERAILLDDTALSAALN. A helical transmembrane segment spans residues 1513–1533; sequence AQFLFQIGVFTAVPMVLGFIL. Residues 1534 to 1539 lie on the Cytoplasmic side of the membrane; that stretch reads EQGFLQ. Residues 1540 to 1560 traverse the membrane as a helical segment; sequence AIVSFITMQFQLCTVFFTFSL. Residues 1561-1609 lie on the Extracellular side of the membrane; the sequence is GTRTHYFGRTILHGGARYQATGRGFVVKHIKFSENYRLYSRSHFVKAME. A run of 2 helical transmembrane segments spans residues 1610–1630 and 1631–1651; these read VILLLVVYLAYGNDEAGAVSY and ILLTVSSWFLAVSWLFAPYLF. At 1652–1703 the chain is on the extracellular side; that stretch reads NPAGFEWQKVVEDFKEWTNWLFYRGGIGVKGAESWEAWWEEELSHIRTLSGR. The helical transmembrane segment at 1704 to 1724 threads the bilayer; that stretch reads IMETILSLRFFIFQYGIVYKL. Residues 1725 to 1732 are Cytoplasmic-facing; sequence KLQGSDTS. A helical membrane pass occupies residues 1733-1753; sequence FAVYGWSWVAFAMIIVLFKVF. Residues 1754–1768 are Extracellular-facing; it reads TFSQKISVNFQLLLR. A helical transmembrane segment spans residues 1769 to 1789; the sequence is FIQGLSLLMALAGIIVAVVLT. Residues 1790 to 1795 are Cytoplasmic-facing; sequence PLSVTD. A helical transmembrane segment spans residues 1796–1816; that stretch reads IFACVLAFIPTGWGILSIACA. At 1817-1838 the chain is on the extracellular side; sequence WKPVLKRMGMWKSIRSLARLYD. A helical membrane pass occupies residues 1839 to 1859; it reads ALMGMLIFLPVALCSWFPFVS. Topologically, residues 1860-1890 are cytoplasmic; sequence TFQTRMMFNQAFSRGLEISLILAGDNPNSGL.

The protein belongs to the glycosyltransferase 48 family.

The protein resides in the cell membrane. It carries out the reaction [(1-&gt;3)-beta-D-glucosyl](n) + UDP-alpha-D-glucose = [(1-&gt;3)-beta-D-glucosyl](n+1) + UDP + H(+). Functionally, involved in sporophytic and gametophytic development. Required for normal plant development. During pollen formation, required for the entry of microspores into mitosis and microspore symmetric division. May be required for correct temporal and spatial control of callose deposition during pollen mitosis. During plant growth and development, callose is found as a transitory component of the cell plate in dividing cells, is a major component of pollen mother cell walls and pollen tubes, and is found as a structural component of plasmodesmatal canals. The polypeptide is Callose synthase 9 (CALS9) (Arabidopsis thaliana (Mouse-ear cress)).